We begin with the raw amino-acid sequence, 159 residues long: uncharacterized protein (159 aa).

4 helical membrane passes run 5–27 (TLDL…RGFV), 34–51 (ASIL…KRLV), 61–83 (SILL…MLFL), and 103–125 (FGFF…LLHV).

It is found in the cell membrane. This is an uncharacterized protein from Treponema pallidum (strain Nichols).